Consider the following 990-residue polypeptide: Aconitate hydratase 3, mitochondrial (990 aa).

Residues 1–78 constitute a mitochondrion transit peptide; the sequence is MYLTASSSAS…PFRFTSQIRA (78 aa). Serine 91 carries the phosphoserine modification. Substrate is bound by residues glutamine 182 and 301 to 303; that span reads DSH. [4Fe-4S] cluster is bound by residues cysteine 533, cysteine 599, and cysteine 602. Substrate is bound by residues arginine 632, arginine 637, arginine 795, and 876-877; that span reads SR.

Belongs to the aconitase/IPM isomerase family. As to quaternary structure, monomer. Interacts with B'GAMMA in the cytosol. [4Fe-4S] cluster serves as cofactor. In terms of processing, phosphorylated at Ser-91 in the cytoplasm; this phosphorylation requires the presence of B'GAMMA. In terms of tissue distribution, major aconitase isoenzyme in young seedlings. Expressed in roots, leaves, stems and flowers, and, at low levels, in seeds.

The protein resides in the mitochondrion. It localises to the cytoplasm. The catalysed reaction is citrate = D-threo-isocitrate. Its pathway is carbohydrate metabolism; tricarboxylic acid cycle; isocitrate from oxaloacetate: step 2/2. In terms of biological role, catalyzes the isomerization of citrate to isocitrate via cis-aconitate. Contributes to oxidative stress tolerance. Modulates cytosolic citrate metabolism during lipid mobilization. Required during seedling growth. This Arabidopsis thaliana (Mouse-ear cress) protein is Aconitate hydratase 3, mitochondrial.